The chain runs to 318 residues: tRNA U34 carboxymethyltransferase (318 aa).

Carboxy-S-adenosyl-L-methionine is bound by residues lysine 88, tryptophan 102, lysine 107, glycine 126, 176-177 (LE), methionine 192, tyrosine 196, and arginine 311.

This sequence belongs to the class I-like SAM-binding methyltransferase superfamily. CmoB family. Homotetramer.

The enzyme catalyses carboxy-S-adenosyl-L-methionine + 5-hydroxyuridine(34) in tRNA = 5-carboxymethoxyuridine(34) in tRNA + S-adenosyl-L-homocysteine + H(+). In terms of biological role, catalyzes carboxymethyl transfer from carboxy-S-adenosyl-L-methionine (Cx-SAM) to 5-hydroxyuridine (ho5U) to form 5-carboxymethoxyuridine (cmo5U) at position 34 in tRNAs. The sequence is that of tRNA U34 carboxymethyltransferase from Pseudomonas putida (strain GB-1).